The primary structure comprises 351 residues: Cytoplasmic dynein 2 light intermediate chain 1 (351 aa).

Positions 304–351 are disordered; that stretch reads TLKDVKDPAKDPQYAESEVDEMRIQKDQELEQYKRSSSKSWKQIELDS. The segment covering 323–337 has biased composition (basic and acidic residues); sequence DEMRIQKDQELEQYK.

It belongs to the dynein light intermediate chain family. In terms of assembly, light intermediate chain of the cytoplasmic dynein complex 2, a multisubunit complex composed at least of eleven different proteins. The cytoplasmic dynein 2 complex consists of two catalytic heavy chains (HCs) and a number of non-catalytic subunits presented by intermediate chains (ICs), light intermediate chains (LICs) and light chains (LCs). Among them, a heavy chain (DYNC2H1), two intermediate chains (DYNC2I2 and DYNC2I1), a light intermediate chain (DYNC2LI1), and a light chain (DYNLT2B) are unique to the dynein-2 complex, but a subset of light chains are also shared by dynein-1 and dynein-2 complexes. Dynein-2 complex is built around two copies of cytoplasmic dynein 2 heavy chain 1 (DYNC2H1). The C-terminal region forms the motor domain, which converts the energy from ATP hydrolysis into movement. Its N-terminal region forms the tail, an extended structure that binds the other subunits and holds the two heavy chains in a homodimer. Interacts with DYNC2H1 (via N-terminus); this interaction stabilizes the dynein-2 complex structure.

The protein resides in the cytoplasm. The protein localises to the cell projection. It localises to the cilium. Its subcellular location is the cytoskeleton. It is found in the cilium basal body. The protein resides in the cilium axoneme. The protein localises to the microtubule organizing center. It localises to the centrosome. Functionally, acts as one of several non-catalytic accessory components of the cytoplasmic dynein 2 complex (dynein-2 complex), a motor protein complex that drives the movement of cargos along microtubules within cilia and flagella in concert with the intraflagellar transport (IFT) system, facilitating the assembly of these organelles. Involved in the regulation of ciliary length. In Bos taurus (Bovine), this protein is Cytoplasmic dynein 2 light intermediate chain 1 (DYNC2LI1).